The following is a 627-amino-acid chain: DNA topoisomerase 4 subunit B (627 aa).

ATP-binding positions include Y4, N41, D68, 109 to 115, and K333; that span reads GLHGVGV. The Toprim domain occupies 412 to 525; it reads TELFIVEGDS…NGHIYIAQPP (114 aa). Residues E418, D490, and D492 each coordinate Mg(2+).

It belongs to the type II topoisomerase family. ParE type 1 subfamily. Heterotetramer composed of ParC and ParE. Mg(2+) serves as cofactor. The cofactor is Mn(2+). Ca(2+) is required as a cofactor.

The enzyme catalyses ATP-dependent breakage, passage and rejoining of double-stranded DNA.. Its activity is regulated as follows. Pyrrolopyrimidines inhibit both GyrB and its paralog in topoisomerase IV (parE). Its function is as follows. Topoisomerase IV is essential for chromosome segregation. It relaxes supercoiled DNA. Performs the decatenation events required during the replication of a circular DNA molecule. The protein is DNA topoisomerase 4 subunit B of Francisella tularensis subsp. holarctica (strain LVS).